A 260-amino-acid chain; its full sequence is MAVGKNKRISKGKKGGKKKAADPFSKKDWYDIKAPSLFITRNVGKTLVTRTQGTKIASEGLKHRVFEVSLADLQNDEDHSYRKIRLRAEDVQGKNVLTNFWGMDVTTDKLRSLVKKWQSLIEAHVDVKTTDNFTLRMFCIGFTKKRANQVKRTCYAQSSQIKQIRRKMREIMVTQAQTCDLKELVQKFIPESIGREIEKATSSIYPLQNVFIRKVKILKAPKFDIGKLMEVHGDYSEDVGVKLDRPAEEAAPEATEVIGA.

Residues 1–18 (MAVGKNKRISKGKKGGKK) are compositionally biased toward basic residues. The tract at residues 1–22 (MAVGKNKRISKGKKGGKKKAAD) is disordered.

Belongs to the eukaryotic ribosomal protein eS1 family. As to quaternary structure, component of the small ribosomal subunit. Mature ribosomes consist of a small (40S) and a large (60S) subunit. The 40S subunit contains about 33 different proteins and 1 molecule of RNA (18S). The 60S subunit contains about 49 different proteins and 3 molecules of RNA (25S, 5.8S and 5S).

The protein localises to the cytoplasm. In Helianthus annuus (Common sunflower), this protein is Small ribosomal subunit protein eS1.